A 172-amino-acid polypeptide reads, in one-letter code: Scytalone dehydratase (172 aa).

Residues Y30, Y50, and F53 each contribute to the substrate site. Active-site residues include H85 and H110. Residue N131 coordinates substrate.

Belongs to the scytalone dehydratase family. In terms of assembly, homotrimer. Each subunit contains an active site, located in the central part of the hydrophobic core of the monomer, which functions independently.

The protein resides in the endosome. The catalysed reaction is scytalone = 1,3,8-trihydroxynaphthalene + H2O. It participates in pigment biosynthesis; melanin biosynthesis. (N-phenoxypropyl)-carboxamides such as carpropamid and derivatives of norephedrine act as inhibitors of scytalone dehydratase activity. Its function is as follows. Scytalone dehydratase; part of the gene cluster that mediates the biosynthesis of dihydroxynaphthalene melanin, a bluish-green pigment and a structural component of the conidial wall. Within the pathway, catalyzes the dehydration of scytalone as well as of vermelone. Is also able to dehydrate the alternate substrate 2,3-dihydro-2,5-dihydroxy-4H-benzopyran-4-one (DDBO) to 5-hydroxy-4H-1-benzopyran-4-one (HBO). This chain is Scytalone dehydratase (SDH1), found in Pyricularia oryzae (strain 70-15 / ATCC MYA-4617 / FGSC 8958) (Rice blast fungus).